A 187-amino-acid chain; its full sequence is 2-oxoglutarate synthase subunit KorC (187 aa).

Heterotetramer of the KorA, KorB, KorC and KorD subunits.

It catalyses the reaction 2 oxidized [2Fe-2S]-[ferredoxin] + 2-oxoglutarate + CoA = succinyl-CoA + 2 reduced [2Fe-2S]-[ferredoxin] + CO2 + H(+). This chain is 2-oxoglutarate synthase subunit KorC (korC), found in Methanocaldococcus jannaschii (strain ATCC 43067 / DSM 2661 / JAL-1 / JCM 10045 / NBRC 100440) (Methanococcus jannaschii).